We begin with the raw amino-acid sequence, 54 residues long: Large ribosomal subunit protein bL33 (54 aa).

It belongs to the bacterial ribosomal protein bL33 family.

The chain is Large ribosomal subunit protein bL33 from Roseiflexus castenholzii (strain DSM 13941 / HLO8).